A 196-amino-acid chain; its full sequence is Probable cobalt-precorrin-6B C(15)-methyltransferase (decarboxylating) (196 aa).

S-adenosyl-L-methionine contacts are provided by residues Thr24, 48–52, Asp72, and Ala101; that span reads GCGTG.

It belongs to the methyltransferase superfamily. Archaeal-type CbiT family.

It catalyses the reaction Co-precorrin-6B + S-adenosyl-L-methionine = Co-precorrin-7 + S-adenosyl-L-homocysteine + CO2. Its pathway is cofactor biosynthesis; adenosylcobalamin biosynthesis; cob(II)yrinate a,c-diamide from sirohydrochlorin (anaerobic route): step 8/10. Functionally, catalyzes the methylation of C-15 in cobalt-precorrin-6B followed by the decarboxylation of C-12 to form cobalt-precorrin-7. The sequence is that of Probable cobalt-precorrin-6B C(15)-methyltransferase (decarboxylating) from Pyrobaculum aerophilum (strain ATCC 51768 / DSM 7523 / JCM 9630 / CIP 104966 / NBRC 100827 / IM2).